The chain runs to 347 residues: Protein RecA (347 aa).

Gly-66–Thr-73 contributes to the ATP binding site. A disordered region spans residues Met-328–Asp-347.

The protein belongs to the RecA family.

The protein resides in the cytoplasm. Can catalyze the hydrolysis of ATP in the presence of single-stranded DNA, the ATP-dependent uptake of single-stranded DNA by duplex DNA, and the ATP-dependent hybridization of homologous single-stranded DNAs. It interacts with LexA causing its activation and leading to its autocatalytic cleavage. The protein is Protein RecA of Hydrogenovibrio crunogenus (strain DSM 25203 / XCL-2) (Thiomicrospira crunogena).